Here is a 78-residue protein sequence, read N- to C-terminus: Probable Fe(2+)-trafficking protein (78 aa).

Belongs to the Fe(2+)-trafficking protein family. In terms of assembly, monomer.

Its function is as follows. Could be a mediator in iron transactions between iron acquisition and iron-requiring processes, such as synthesis and/or repair of Fe-S clusters in biosynthetic enzymes. This Buchnera aphidicola subsp. Schizaphis graminum (strain Sg) protein is Probable Fe(2+)-trafficking protein.